A 309-amino-acid chain; its full sequence is Phytoene synthase (309 aa).

This sequence belongs to the phytoene/squalene synthase family.

The catalysed reaction is 2 (2E,6E,10E)-geranylgeranyl diphosphate = 15-cis-phytoene + 2 diphosphate. It functions in the pathway carotenoid biosynthesis; phytoene biosynthesis; all-trans-phytoene from geranylgeranyl diphosphate: step 1/1. Functionally, catalyzes the reaction from prephytoene diphosphate to phytoene. The polypeptide is Phytoene synthase (crtB) (Arthrospira platensis (Spirulina platensis)).